A 315-amino-acid chain; its full sequence is Zinc transport protein ZntB (315 aa).

Topologically, residues 1–250 (MGFMIEHWDF…RDEKTNKNSY (250 aa)) are cytoplasmic. Residues 251-271 (LFTLVATIFLPTSFLTGLLGI) form a helical membrane-spanning segment. Residues 272–282 (NIGGMPGVESS) are Periplasmic-facing. Residues 283–303 (MAFTWFCIALIVIFGLEWLLF) traverse the membrane as a helical segment. Residues 304-315 (KRLGFTNKTDDE) lie on the Cytoplasmic side of the membrane.

Belongs to the CorA metal ion transporter (MIT) (TC 1.A.35) family. As to quaternary structure, homopentamer. Can assemble pentamers in the absence of the transmembrane regions.

It is found in the cell inner membrane. It catalyses the reaction Zn(2+)(out) + H(+)(out) = Zn(2+)(in) + H(+)(in). Its function is as follows. Zinc transporter. Acts as a Zn(2+):proton symporter, which likely mediates zinc ion uptake. This chain is Zinc transport protein ZntB, found in Vibrio parahaemolyticus serotype O3:K6 (strain RIMD 2210633).